The primary structure comprises 179 residues: Natural killer cells antigen CD94 (179 aa).

Over 1–10 (MAVFKTTLWR) the chain is Cytoplasmic. The helical; Signal-anchor for type II membrane protein transmembrane segment at 11 to 31 (LISGTLGIICLSLMSTLGILL) threads the bilayer. The Extracellular portion of the chain corresponds to 32–179 (KNSFTKLSIE…NRYICKQQLI (148 aa)). 2 cysteine pairs are disulfide-bonded: C58–C70 and C61–C72. In terms of domain architecture, C-type lectin spans 68-175 (YRCNCYFISS…CEDKNRYICK (108 aa)). N-linked (GlcNAc...) asparagine glycosylation is found at N83 and N132. 2 disulfide bridges follow: C89-C174 and C152-C166.

In terms of assembly, can form disulfide-bonded heterodimer with NKG2 family members KLRC1 and KLRC2. KLRD1-KLRC1 heterodimer interacts with peptide-bound HLA-E-B2M heterotrimeric complex. KLRD1 plays a prominent role in directly interacting with HLA-E. KLRD1-KLRC1 interacts with much higher affinity with peptide-bound HLA-E-B2M than KLRD1-KLRC2. Interacts with the adapter protein TYROBP/DAP12; this interaction is required for cell surface expression and cell activation. In terms of tissue distribution, expressed in NK cell subsets (at protein level). Expressed in memory/effector CD8-positive alpha-beta T cell subsets (at protein level). Expressed in melanoma-specific cytotoxic T cell clones (at protein level). Expressed in terminally differentiated cytotoxic gamma-delta T cells (at protein level). KLRD1-KLRC1 and KLRD1-KLRC2 are differentially expressed in NK and T cell populations, with only minor subsets expressing both receptor complexes (at protein level).

It is found in the cell membrane. Functionally, immune receptor involved in self-nonself discrimination. In complex with KLRC1 or KLRC2 on cytotoxic and regulatory lymphocyte subsets, recognizes non-classical major histocompatibility (MHC) class Ib molecule HLA-E loaded with self-peptides derived from the signal sequence of classical MHC class Ia and non-classical MHC class Ib molecules. Enables cytotoxic cells to monitor the expression of MHC class I molecules in healthy cells and to tolerate self. Primarily functions as a ligand binding subunit as it lacks the capacity to signal. Its function is as follows. KLRD1-KLRC1 acts as an immune inhibitory receptor. Key inhibitory receptor on natural killer (NK) cells that regulates their activation and effector functions. Dominantly counteracts T cell receptor signaling on a subset of memory/effector CD8-positive T cells as part of an antigen-driven response to avoid autoimmunity. On intraepithelial CD8-positive gamma-delta regulatory T cells triggers TGFB1 secretion, which in turn limits the cytotoxic programming of intraepithelial CD8-positive alpha-beta T cells, distinguishing harmless from pathogenic antigens. In HLA-E-rich tumor microenvironment, acts as an immune inhibitory checkpoint and may contribute to progressive loss of effector functions of NK cells and tumor-specific T cells, a state known as cell exhaustion. Upon HLA-E-peptide binding, transmits intracellular signals through KLRC1 immunoreceptor tyrosine-based inhibition motifs (ITIMs) by recruiting INPP5D/SHIP-1 and INPPL1/SHIP-2 tyrosine phosphatases to ITIMs, and ultimately opposing signals transmitted by activating receptors through dephosphorylation of proximal signaling molecules. KLRD1-KLRC2 acts as an immune activating receptor. On cytotoxic lymphocyte subsets recognizes HLA-E loaded with signal sequence-derived peptides from non-classical MHC class Ib HLA-G molecules, likely playing a role in the generation and effector functions of adaptive NK cells and in maternal-fetal tolerance during pregnancy. Regulates the effector functions of terminally differentiated cytotoxic lymphocyte subsets, and in particular may play a role in adaptive NK cell response to viral infection. Upon HLA-E-peptide binding, transmits intracellular signals via the adapter protein TYROBP/DAP12, triggering the phosphorylation of proximal signaling molecules and cell activation. In terms of biological role, (Microbial infection) Viruses like human cytomegalovirus have evolved an escape mechanism whereby virus-induced down-regulation of host MHC class I molecules is coupled to the binding of viral peptides to HLA-E, restoring HLA-E expression and inducing HLA-E-dependent NK cell immune tolerance to infected cells. Recognizes HLA-E in complex with human cytomegalovirus UL40-derived peptide (VMAPRTLIL) and inhibits NK cell cytotoxicity. Functionally, (Microbial infection) May recognize HLA-E in complex with HIV-1 gag/Capsid protein p24-derived peptide (AISPRTLNA) on infected cells and may inhibit NK cell cytotoxicity, a mechanism that allows HIV-1 to escape immune recognition. Its function is as follows. (Microbial infection) Upon SARS-CoV-2 infection, may contribute to functional exhaustion of cytotoxic NK cells and CD8-positive T cells. On NK cells, may recognize HLA-E in complex with SARS-CoV-2 S/Spike protein S1-derived peptide (LQPRTFLL) expressed on the surface of lung epithelial cells, inducing NK cell exhaustion and dampening antiviral immune surveillance. This Homo sapiens (Human) protein is Natural killer cells antigen CD94 (KLRD1).